Consider the following 391-residue polypeptide: Trehalose-phosphate phosphatase (391 aa).

The active-site Nucleophile is aspartate 147. Mg(2+) is bound by residues aspartate 147, aspartate 149, and aspartate 330. Position 147-149 (147-149 (DFD)) interacts with substrate.

Belongs to the trehalose phosphatase family. The cofactor is Mg(2+).

The catalysed reaction is alpha,alpha-trehalose 6-phosphate + H2O = alpha,alpha-trehalose + phosphate. It participates in glycan biosynthesis; trehalose biosynthesis. Its function is as follows. Removes the phosphate from trehalose 6-phosphate to produce free trehalose. This is Trehalose-phosphate phosphatase (otsB) from Mycolicibacterium paratuberculosis (strain ATCC BAA-968 / K-10) (Mycobacterium paratuberculosis).